The following is a 1544-amino-acid chain: Lysine-specific demethylase 5B (1544 aa).

The span at M1–A14 shows a compositional bias: pro residues. The tract at residues M1–P22 is disordered. The 42-residue stretch at C32–P73 folds into the JmjN domain. Positions T97–S187 constitute an ARID domain. Glycyl lysine isopeptide (Lys-Gly) (interchain with G-Cter in SUMO2) cross-links involve residues K148, K204, K209, K242, K274, and K278. Residues T200–A228 are disordered. Residues D202 to P214 show a composition bias toward basic and acidic residues. The disordered stretch occupies residues N269 to K297. The PHD-type 1 zinc-finger motif lies at L309 to Q359. Y425 is a 2-oxoglutarate binding site. One can recognise a JmjC domain in the interval E453–R619. Residues H499 and E501 each contribute to the Fe cation site. Positions 507, 509, and 517 each coordinate 2-oxoglutarate. H587 contributes to the Fe cation binding site. A C5HC2 zinc finger spans residues C692–M744. A Glycyl lysine isopeptide (Lys-Gly) (interchain with G-Cter in SUMO2) cross-link involves residue K769. K832 is subject to N6-acetyllysine. S986 is subject to Phosphoserine. The PHD-type 2 zinc finger occupies M1176–S1224. The segment covering Q1297–S1314 has biased composition (polar residues). Residues Q1297–D1318 form a disordered region. S1328 carries the phosphoserine modification. Polar residues predominate over residues P1374 to S1388. Residues P1374 to D1447 are disordered. Positions S1389 to V1427 are enriched in basic and acidic residues. Residues K1428–S1441 are compositionally biased toward basic residues. K1450 participates in a covalent cross-link: Glycyl lysine isopeptide (Lys-Gly) (interchain with G-Cter in SUMO2). Residue S1456 is modified to Phosphoserine. A PHD-type 3 zinc finger spans residues D1484–K1538.

It belongs to the JARID1 histone demethylase family. Interacts with FOXG1B, PAX9, MYC, MYCN and RB1. Interacts with HDAC1, HDAC4, HDAC5 and HDAC7. Interacts (via PHD-type 1 zinc finger) with histone H3 unmodified at 'Lys-4'; the interaction is inhibited when histone H3 is methylated at 'Arg-2' or 'Lys-4'. Fe(2+) is required as a cofactor. Present at highest levels in testis, where it is enriched in spermatogonia and pachytene cells (at protein level).

The protein localises to the nucleus. The enzyme catalyses N(6),N(6),N(6)-trimethyl-L-lysyl(4)-[histone H3] + 3 2-oxoglutarate + 3 O2 = L-lysyl(4)-[histone H3] + 3 formaldehyde + 3 succinate + 3 CO2. Its function is as follows. Histone demethylase that demethylates 'Lys-4' of histone H3, thereby playing a central role in histone code. Does not demethylate histone H3 'Lys-9' or H3 'Lys-27'. Demethylates trimethylated, dimethylated and monomethylated H3 'Lys-4'. Acts as a transcriptional corepressor for FOXG1B and PAX9. Represses the CLOCK-BMAL1 heterodimer-mediated transcriptional activation of the core clock component PER2. In Mus musculus (Mouse), this protein is Lysine-specific demethylase 5B (Kdm5b).